We begin with the raw amino-acid sequence, 288 residues long: Rhox homeobox family member 2 (288 aa).

The segment at 16-136 (SPAVDDEKEL…GLEPGNAQQP (121 aa)) is disordered. The span at 39–48 (VKEEEEDAQP) shows a compositional bias: acidic residues. Residues 68–80 (GEEKDGGGEEKDG) are compositionally biased toward basic and acidic residues. Residues 134–193 (QQPNVHAFTPLQLQELERIFQREQFPSEFLRRRLARSMNVTELAVQIWFENRRAKWRRHQ) constitute a DNA-binding region (homeobox). The Nuclear localization signal signature appears at 186–195 (RAKWRRHQRA).

This sequence belongs to the paired-like homeobox family. PEPP subfamily. In terms of tissue distribution, testis. Not detected in epididymis nor placenta. In testis, mainly expressed in germ cells, but also detected in somatic cells such as Sertoli cells, Leydig cells and peritubular cells.

It is found in the nucleus. Its function is as follows. Transcription factor maybe involved in reproductive processes. Modulates expression of target genes encoding proteins involved in processes relevant to spermatogenesis. This is Rhox homeobox family member 2 from Homo sapiens (Human).